The sequence spans 65 residues: Muscarinic toxin 3 (65 aa).

4 cysteine pairs are disulfide-bonded: Cys3-Cys24, Cys17-Cys42, Cys46-Cys57, and Cys58-Cys63.

It belongs to the three-finger toxin family. Short-chain subfamily. Aminergic toxin sub-subfamily. As to expression, expressed by the venom gland.

It is found in the secreted. Potent antagonist (IC(50)=1-10 nM) of M4 (CHRM4) muscarinic receptors, and CHRM1, ADRA1A, ADRA2A and ADRA2C adrenergic receptors. Also antagonises ADRA1B and ADRA1D adrenergic receptors with a 10-times lower affinity. This is Muscarinic toxin 3 from Dendroaspis angusticeps (Eastern green mamba).